Here is a 370-residue protein sequence, read N- to C-terminus: Aminomethyltransferase (370 aa).

The protein belongs to the GcvT family. The glycine cleavage system is composed of four proteins: P, T, L and H.

It carries out the reaction N(6)-[(R)-S(8)-aminomethyldihydrolipoyl]-L-lysyl-[protein] + (6S)-5,6,7,8-tetrahydrofolate = N(6)-[(R)-dihydrolipoyl]-L-lysyl-[protein] + (6R)-5,10-methylene-5,6,7,8-tetrahydrofolate + NH4(+). Its function is as follows. The glycine cleavage system catalyzes the degradation of glycine. The sequence is that of Aminomethyltransferase from Clostridium botulinum (strain Kyoto / Type A2).